Reading from the N-terminus, the 341-residue chain is Glycerol-3-phosphate dehydrogenase [NAD(P)+] (341 aa).

NADPH is bound by residues Ser15, Trp16, Arg36, and Lys110. The sn-glycerol 3-phosphate site is built by Lys110, Gly139, and Ser141. Ala143 provides a ligand contact to NADPH. Positions 194, 247, 257, 258, and 259 each coordinate sn-glycerol 3-phosphate. The active-site Proton acceptor is Lys194. Arg258 is a binding site for NADPH. Val282 and Glu284 together coordinate NADPH.

Belongs to the NAD-dependent glycerol-3-phosphate dehydrogenase family.

It is found in the cytoplasm. It carries out the reaction sn-glycerol 3-phosphate + NAD(+) = dihydroxyacetone phosphate + NADH + H(+). The catalysed reaction is sn-glycerol 3-phosphate + NADP(+) = dihydroxyacetone phosphate + NADPH + H(+). Its pathway is membrane lipid metabolism; glycerophospholipid metabolism. Catalyzes the reduction of the glycolytic intermediate dihydroxyacetone phosphate (DHAP) to sn-glycerol 3-phosphate (G3P), the key precursor for phospholipid synthesis. This chain is Glycerol-3-phosphate dehydrogenase [NAD(P)+], found in Xanthomonas campestris pv. campestris (strain 8004).